A 136-amino-acid chain; its full sequence is Cytochrome b5 (136 aa).

A Cytochrome b5 heme-binding domain is found at 5–81 (TKVFTLAEVS…LDEYYVGDID (77 aa)). Heme-binding residues include histidine 40 and histidine 64. Residues 107-127 (FVVKLLQFLVPLIILGVAFGI) traverse the membrane as a helical segment.

The protein belongs to the cytochrome b5 family. Is highly expressed in developing seeds, moderately expressed in flowers, and is expressed at low levels in the leaf.

It is found in the endoplasmic reticulum membrane. It localises to the microsome membrane. Cytochrome b5 is a membrane bound hemoprotein which function as an electron carrier for several membrane bound oxygenases. May play a key role in the modification by desaturation of fatty acids in the endoplasmic reticulum, which in the developing seed is utilized for membrane synthesis and in the developmentally regulated production of large amounts of storage lipids. Is involved in the reduction of cytochrome P-450 and may therefore be involved in flavonoid biosynthesis in the petals. The chain is Cytochrome b5 from Nicotiana tabacum (Common tobacco).